The primary structure comprises 137 residues: Large ribosomal subunit protein uL14 (137 aa).

It belongs to the universal ribosomal protein uL14 family. In terms of assembly, part of the 50S ribosomal subunit. Forms a cluster with proteins L3 and L24e, part of which may contact the 16S rRNA in 2 intersubunit bridges.

Its function is as follows. Binds to 23S rRNA. Forms part of two intersubunit bridges in the 70S ribosome. In Ignicoccus hospitalis (strain KIN4/I / DSM 18386 / JCM 14125), this protein is Large ribosomal subunit protein uL14.